The primary structure comprises 45 residues: MCYYHNYYGSLDYGCSYGSEYGNSGYACNFPCSYGRFLLAPRKKF.

It belongs to the KRTAP type 20 family. As to quaternary structure, interacts with hair keratins.

Functionally, in the hair cortex, hair keratin intermediate filaments are embedded in an interfilamentous matrix, consisting of hair keratin-associated proteins (KRTAP), which are essential for the formation of a rigid and resistant hair shaft through their extensive disulfide bond cross-linking with abundant cysteine residues of hair keratins. The matrix proteins include the high-sulfur and high-glycine-tyrosine keratins. The polypeptide is Keratin-associated protein 22-2 (KRTAP22-2) (Homo sapiens (Human)).